The chain runs to 21 residues: Cupiennin-6b (21 aa).

Residue S21 is modified to Serine amide.

As to expression, expressed by the venom gland.

The protein resides in the secreted. The chain is Cupiennin-6b from Cupiennius salei (American wandering spider).